Reading from the N-terminus, the 339-residue chain is Putative pectinesterase 10 (339 aa).

The first 28 residues, 1 to 28, serve as a signal peptide directing secretion; that stretch reads MKGVTIHNFCYSYFKVCLLVMSLAYGSA. Asn-112 carries an N-linked (GlcNAc...) asparagine glycan. Thr-116 lines the substrate pocket. Asp-169 acts as the Proton donor in catalysis. Asp-190 functions as the Nucleophile in the catalytic mechanism. Residues Arg-252 and Trp-254 each coordinate substrate. N-linked (GlcNAc...) asparagine glycosylation is present at Asn-322.

The protein belongs to the pectinesterase family. As to expression, expressed in siliques.

The protein localises to the secreted. It localises to the cell wall. It catalyses the reaction [(1-&gt;4)-alpha-D-galacturonosyl methyl ester](n) + n H2O = [(1-&gt;4)-alpha-D-galacturonosyl](n) + n methanol + n H(+). It participates in glycan metabolism; pectin degradation; 2-dehydro-3-deoxy-D-gluconate from pectin: step 1/5. Its function is as follows. Acts in the modification of cell walls via demethylesterification of cell wall pectin. This Arabidopsis thaliana (Mouse-ear cress) protein is Putative pectinesterase 10 (PME10).